Reading from the N-terminus, the 257-residue chain is BTB/POZ domain-containing protein KCTD1 (257 aa).

The tract at residues 1-25 (MSRPLITRSPASPLNNQGIPTPAQL) is disordered. Ser-9 and Ser-12 each carry phosphoserine. The segment covering 9 to 25 (SPASPLNNQGIPTPAQL) has biased composition (polar residues). The 71-residue stretch at 30–100 (APVHIDVGGH…LRTSKLLIPD (71 aa)) folds into the BTB domain.

As to quaternary structure, forms homopentamers. Interacts with KCTD15, probably forming heteropentamers depending on its abundance in a cell-type dependent manner. Interacts with TFAP2A, TFAP2B and TFAP2C via the BTB domain. Post-translationally, sumoylated. In terms of tissue distribution, expressed in mammary gland, kidney, brain and ovary.

The protein resides in the nucleus. In terms of biological role, may repress the transcriptional activity of AP-2 family members, including TFAP2A, TFAP2B and TFAP2C to various extent. The polypeptide is BTB/POZ domain-containing protein KCTD1 (KCTD1) (Homo sapiens (Human)).